Reading from the N-terminus, the 98-residue chain is Cell division topological specificity factor (98 aa).

Belongs to the MinE family.

Prevents the cell division inhibition by proteins MinC and MinD at internal division sites while permitting inhibition at polar sites. This ensures cell division at the proper site by restricting the formation of a division septum at the midpoint of the long axis of the cell. This is Cell division topological specificity factor from Methylorubrum populi (strain ATCC BAA-705 / NCIMB 13946 / BJ001) (Methylobacterium populi).